The following is a 239-amino-acid chain: 1-(5-phosphoribosyl)-5-[(5-phosphoribosylamino)methylideneamino] imidazole-4-carboxamide isomerase (239 aa).

Catalysis depends on Asp8, which acts as the Proton acceptor. The Proton donor role is filled by Asp129.

Belongs to the HisA/HisF family.

The protein localises to the cytoplasm. The catalysed reaction is 1-(5-phospho-beta-D-ribosyl)-5-[(5-phospho-beta-D-ribosylamino)methylideneamino]imidazole-4-carboxamide = 5-[(5-phospho-1-deoxy-D-ribulos-1-ylimino)methylamino]-1-(5-phospho-beta-D-ribosyl)imidazole-4-carboxamide. The protein operates within amino-acid biosynthesis; L-histidine biosynthesis; L-histidine from 5-phospho-alpha-D-ribose 1-diphosphate: step 4/9. This chain is 1-(5-phosphoribosyl)-5-[(5-phosphoribosylamino)methylideneamino] imidazole-4-carboxamide isomerase, found in Legionella pneumophila (strain Paris).